The following is a 374-amino-acid chain: DNA replication and repair protein RecF (374 aa).

30–37 (GNNAQGKS) contacts ATP.

The protein belongs to the RecF family.

It localises to the cytoplasm. In terms of biological role, the RecF protein is involved in DNA metabolism; it is required for DNA replication and normal SOS inducibility. RecF binds preferentially to single-stranded, linear DNA. It also seems to bind ATP. The protein is DNA replication and repair protein RecF of Nostoc punctiforme (strain ATCC 29133 / PCC 73102).